The primary structure comprises 72 residues: Protein SlyX homolog (72 aa).

The protein belongs to the SlyX family.

The sequence is that of Protein SlyX homolog from Bradyrhizobium diazoefficiens (strain JCM 10833 / BCRC 13528 / IAM 13628 / NBRC 14792 / USDA 110).